A 201-amino-acid polypeptide reads, in one-letter code: MSKVLVLKSSILAGYSQSNQLSDYFVEQWREKHSADEITVRDLAANPIPVLDGELVGALRPSDAPLTTRQQEALALSDELIAELKAHDVIVIAAPMYNFNISTQLKNYFDLVARAGVTFRYTENGPEGLVTGKKAIVITSRGGIHKDGPTDLVTPYLSTFLGFIGITDVKFVFAEGIAYGPEMAAKAQSDAKAAIDSIVAA.

FMN is bound by residues S10, 16–18, 96–99, and 140–143; these read SQS, MYNF, and SRGG.

Belongs to the azoreductase type 1 family. Homodimer. It depends on FMN as a cofactor.

It catalyses the reaction 2 a quinone + NADH + H(+) = 2 a 1,4-benzosemiquinone + NAD(+). The catalysed reaction is N,N-dimethyl-1,4-phenylenediamine + anthranilate + 2 NAD(+) = 2-(4-dimethylaminophenyl)diazenylbenzoate + 2 NADH + 2 H(+). Functionally, quinone reductase that provides resistance to thiol-specific stress caused by electrophilic quinones. Also exhibits azoreductase activity. Catalyzes the reductive cleavage of the azo bond in aromatic azo compounds to the corresponding amines. The chain is FMN-dependent NADH:quinone oxidoreductase from Escherichia coli O157:H7.